The primary structure comprises 197 residues: NAD(P)H-quinone oxidoreductase subunit 6, chloroplastic (197 aa).

5 helical membrane passes run 10–30, 39–59, 60–80, 94–114, and 147–167; these read FVLA…VLLV, LGLV…DFVA, AAQL…AVMI, IGYI…SFVI, and LLGE…AALV.

The protein belongs to the complex I subunit 6 family. As to quaternary structure, NDH is composed of at least 16 different subunits, 5 of which are encoded in the nucleus.

The protein resides in the plastid. It localises to the chloroplast thylakoid membrane. It carries out the reaction a plastoquinone + NADH + (n+1) H(+)(in) = a plastoquinol + NAD(+) + n H(+)(out). The enzyme catalyses a plastoquinone + NADPH + (n+1) H(+)(in) = a plastoquinol + NADP(+) + n H(+)(out). Functionally, NDH shuttles electrons from NAD(P)H:plastoquinone, via FMN and iron-sulfur (Fe-S) centers, to quinones in the photosynthetic chain and possibly in a chloroplast respiratory chain. The immediate electron acceptor for the enzyme in this species is believed to be plastoquinone. Couples the redox reaction to proton translocation, and thus conserves the redox energy in a proton gradient. This chain is NAD(P)H-quinone oxidoreductase subunit 6, chloroplastic (ndhG), found in Adiantum capillus-veneris (Maidenhair fern).